Here is a 249-residue protein sequence, read N- to C-terminus: 5'-nucleotidase SurE (249 aa).

The a divalent metal cation site is built by D8, D9, S39, and N91.

This sequence belongs to the SurE nucleotidase family. Requires a divalent metal cation as cofactor.

Its subcellular location is the cytoplasm. The catalysed reaction is a ribonucleoside 5'-phosphate + H2O = a ribonucleoside + phosphate. Its function is as follows. Nucleotidase that shows phosphatase activity on nucleoside 5'-monophosphates. The sequence is that of 5'-nucleotidase SurE from Haemophilus influenzae (strain ATCC 51907 / DSM 11121 / KW20 / Rd).